Here is a 451-residue protein sequence, read N- to C-terminus: Tubulin beta-1 chain (451 aa).

The MREI motif motif lies at 1–4; that stretch reads MREI. Positions 11, 69, 138, 142, 143, and 144 each coordinate GTP. Glu69 contributes to the Mg(2+) binding site. The residue at position 172 (Ser172) is a Phosphoserine; by CDK1. 2 residues coordinate GTP: Asn204 and Asn226. The interval 432–451 is disordered; it reads LEEDEEVTEEAEMEPEDKGH. Residues 433–451 show a composition bias toward acidic residues; that stretch reads EEDEEVTEEAEMEPEDKGH. The residue at position 440 (Glu440) is a 5-glutamyl polyglutamate.

It belongs to the tubulin family. Dimer of alpha and beta chains. A typical microtubule is a hollow water-filled tube with an outer diameter of 25 nm and an inner diameter of 15 nM. Alpha-beta heterodimers associate head-to-tail to form protofilaments running lengthwise along the microtubule wall with the beta-tubulin subunit facing the microtubule plus end conferring a structural polarity. Microtubules usually have 13 protofilaments but different protofilament numbers can be found in some organisms and specialized cells. Interacts with RANBP10. Mg(2+) serves as cofactor. In terms of processing, some glutamate residues at the C-terminus are polyglutamylated, resulting in polyglutamate chains on the gamma-carboxyl group. Polyglutamylation plays a key role in microtubule severing by spastin (SPAST). SPAST preferentially recognizes and acts on microtubules decorated with short polyglutamate tails: severing activity by SPAST increases as the number of glutamates per tubulin rises from one to eight, but decreases beyond this glutamylation threshold. Glutamylation is also involved in cilia motility. Some glutamate residues at the C-terminus are monoglycylated but not polyglycylated due to the absence of functional TTLL10 in human. Monoglycylation is mainly limited to tubulin incorporated into cilia and flagella axonemes, which is required for their stability and maintenance. Flagella glycylation controls sperm motility. Both polyglutamylation and monoglycylation can coexist on the same protein on adjacent residues, and lowering glycylation levels increases polyglutamylation, and reciprocally. Post-translationally, phosphorylated on Ser-172 by CDK1 during the cell cycle, from metaphase to telophase, but not in interphase. This phosphorylation inhibits tubulin incorporation into microtubules. In terms of tissue distribution, hematopoietic cell-specific. Major isotype in leukocytes, where it represents 50% of all beta-tubulins.

It localises to the cytoplasm. It is found in the cytoskeleton. In terms of biological role, tubulin is the major constituent of microtubules, a cylinder consisting of laterally associated linear protofilaments composed of alpha- and beta-tubulin heterodimers. Microtubules grow by the addition of GTP-tubulin dimers to the microtubule end, where a stabilizing cap forms. Below the cap, tubulin dimers are in GDP-bound state, owing to GTPase activity of alpha-tubulin. In Homo sapiens (Human), this protein is Tubulin beta-1 chain (TUBB1).